A 109-amino-acid chain; its full sequence is Urease subunit gamma (109 aa).

The protein belongs to the urease gamma subunit family. As to quaternary structure, heterotrimer of UreA (gamma), UreB (beta) and UreC (alpha) subunits. Three heterotrimers associate to form the active enzyme.

The protein localises to the cytoplasm. It catalyses the reaction urea + 2 H2O + H(+) = hydrogencarbonate + 2 NH4(+). The protein operates within nitrogen metabolism; urea degradation; CO(2) and NH(3) from urea (urease route): step 1/1. This is Urease subunit gamma from Natronomonas pharaonis (strain ATCC 35678 / DSM 2160 / CIP 103997 / JCM 8858 / NBRC 14720 / NCIMB 2260 / Gabara) (Halobacterium pharaonis).